The sequence spans 405 residues: PVYISIGCNLPAIPHPTFSRDPVPFSLAPKLSNQMGLEAAVEAAAEFLNKAVKPVLVGGPKLRVAKASDAFVELADASGYALAVMPSAKGMVPEHHPHFIGTYWGAVSTAFCAEIVESADAYLFAGPIFNDYSSVGYSLLLKKEKAIIVMPDRVVIANGPAFGCVLMNDFLKALAKRLKHNNVAYENYHRIFVPDGTPLKSASKEPLRVNVMFQHIQKMLSSETAVIAETGDSWFNCQKLKLPEGCGYEFQMQYGSIGWSVGATLGYAQAVPEKRVIACIGDGSFQVTAQDVSTMLRCGQKTIIFLINNGGYTIEVEIHDGPYNVIKNWNYTGLVDAIHNGEGKCWTTKVFCEEELVEAIAKATGPKKDSLCFIEVIVHKDDTSKELLEWGSRVSAANSRPPNPQ.

The segment at 232–314 (DSWFNCQKLK…FLINNGGYTI (83 aa)) is thiamine pyrophosphate binding. 3 residues coordinate Mg(2+): D282, N309, and G311. Residue E315 participates in substrate binding.

Belongs to the TPP enzyme family. Homotetramer. Requires a metal cation as cofactor. Thiamine diphosphate serves as cofactor.

It catalyses the reaction a 2-oxocarboxylate + H(+) = an aldehyde + CO2. The chain is Pyruvate decarboxylase 2 (PDC2) from Pisum sativum (Garden pea).